The sequence spans 127 residues: Glycine cleavage system H protein (127 aa).

Positions 24 to 106 (TATLGISAFA…YGEGWLVKVQ (83 aa)) constitute a Lipoyl-binding domain. Lysine 65 carries the post-translational modification N6-lipoyllysine.

Belongs to the GcvH family. In terms of assembly, the glycine cleavage system is composed of four proteins: P, T, L and H. (R)-lipoate serves as cofactor.

Its function is as follows. The glycine cleavage system catalyzes the degradation of glycine. The H protein shuttles the methylamine group of glycine from the P protein to the T protein. This is Glycine cleavage system H protein from Thermosynechococcus vestitus (strain NIES-2133 / IAM M-273 / BP-1).